We begin with the raw amino-acid sequence, 161 residues long: ATP synthase subunit b 1 (161 aa).

A helical membrane pass occupies residues 1-21; the sequence is MFATAEFWILACLVAFFAILG.

It belongs to the ATPase B chain family. As to quaternary structure, F-type ATPases have 2 components, F(1) - the catalytic core - and F(0) - the membrane proton channel. F(1) has five subunits: alpha(3), beta(3), gamma(1), delta(1), epsilon(1). F(0) has three main subunits: a(1), b(2) and c(10-14). The alpha and beta chains form an alternating ring which encloses part of the gamma chain. F(1) is attached to F(0) by a central stalk formed by the gamma and epsilon chains, while a peripheral stalk is formed by the delta and b chains.

It is found in the cell inner membrane. Its function is as follows. F(1)F(0) ATP synthase produces ATP from ADP in the presence of a proton or sodium gradient. F-type ATPases consist of two structural domains, F(1) containing the extramembraneous catalytic core and F(0) containing the membrane proton channel, linked together by a central stalk and a peripheral stalk. During catalysis, ATP synthesis in the catalytic domain of F(1) is coupled via a rotary mechanism of the central stalk subunits to proton translocation. Functionally, component of the F(0) channel, it forms part of the peripheral stalk, linking F(1) to F(0). The protein is ATP synthase subunit b 1 of Parvibaculum lavamentivorans (strain DS-1 / DSM 13023 / NCIMB 13966).